We begin with the raw amino-acid sequence, 221 residues long: Adenylate kinase (221 aa).

ATP is bound at residue 10–15 (GAGKGT). The NMP stretch occupies residues 30–59 (STGDMLRAAVKAGTPLGLEAKRFMDAGELV). Residues Thr31, Arg36, 57–59 (ELV), 85–88 (GFPR), and Gln92 each bind AMP. Positions 122–159 (GRRSHAASGRTYHVKFNPPKVEGVDDMTGEPLIQRDDD) are LID. ATP is bound by residues Arg123 and 132–133 (TY). Arg156 and Arg167 together coordinate AMP. Gly207 is an ATP binding site.

This sequence belongs to the adenylate kinase family. Monomer.

Its subcellular location is the cytoplasm. It catalyses the reaction AMP + ATP = 2 ADP. The protein operates within purine metabolism; AMP biosynthesis via salvage pathway; AMP from ADP: step 1/1. In terms of biological role, catalyzes the reversible transfer of the terminal phosphate group between ATP and AMP. Plays an important role in cellular energy homeostasis and in adenine nucleotide metabolism. This Paraburkholderia phytofirmans (strain DSM 17436 / LMG 22146 / PsJN) (Burkholderia phytofirmans) protein is Adenylate kinase.